Reading from the N-terminus, the 191-residue chain is dTTP/UTP pyrophosphatase (191 aa).

The active-site Proton acceptor is D64.

The protein belongs to the Maf family. YhdE subfamily. A divalent metal cation is required as a cofactor.

The protein resides in the cytoplasm. It catalyses the reaction dTTP + H2O = dTMP + diphosphate + H(+). The catalysed reaction is UTP + H2O = UMP + diphosphate + H(+). In terms of biological role, nucleoside triphosphate pyrophosphatase that hydrolyzes dTTP and UTP. May have a dual role in cell division arrest and in preventing the incorporation of modified nucleotides into cellular nucleic acids. This Thermosipho africanus (strain TCF52B) protein is dTTP/UTP pyrophosphatase.